The chain runs to 157 residues: MGVIEFLLALAQDMILAAIPAVGFAMVFNVPVRALRWCALLGSIGHGSRMILMTSGLNIEWSTFMASMLVGTIGIQWSRWYLAHPKVFTVAAVIPMFPGISAYTAMISAVKISQLGYSEPLMITLLTNFLTASSIVGALSIGLSIPGLWLYRKRPRV.

4 consecutive transmembrane segments (helical) span residues 8–28 (LALAQDMILAAIPAVGFAMVF), 50–70 (MILMTSGLNIEWSTFMASMLV), 87–107 (VFTVAAVIPMFPGISAYTAMI), and 129–149 (FLTASSIVGALSIGLSIPGLW).

Belongs to the ThrE exporter (TC 2.A.79) family. In terms of assembly, the transporter is composed of YjjB and YjjP.

Its subcellular location is the cell inner membrane. Functionally, involved in succinate export with YjjP. Both proteins are required for export. The chain is Probable succinate transporter subunit YjjB from Escherichia coli O127:H6 (strain E2348/69 / EPEC).